A 362-amino-acid chain; its full sequence is Molybdenum import ATP-binding protein ModC (362 aa).

The ABC transporter domain occupies 1-236 (MTASGLYLNL…TQSPTAQGED (236 aa)). 36–43 (GPSGSGKT) contributes to the ATP binding site. Residues 297–362 (DSTILNKLAA…AQVKSVAIVG (66 aa)) form the Mop domain.

The protein belongs to the ABC transporter superfamily. Molybdate importer (TC 3.A.1.8) family. In terms of assembly, the complex is composed of two ATP-binding proteins (ModC), two transmembrane proteins (ModB) and a solute-binding protein (ModA).

It is found in the cell inner membrane. It carries out the reaction molybdate(out) + ATP + H2O = molybdate(in) + ADP + phosphate + H(+). Its function is as follows. Part of the ABC transporter complex ModABC involved in molybdenum import. Responsible for energy coupling to the transport system. This is Molybdenum import ATP-binding protein ModC from Saccharophagus degradans (strain 2-40 / ATCC 43961 / DSM 17024).